The chain runs to 280 residues: Release factor glutamine methyltransferase (280 aa).

S-adenosyl-L-methionine contacts are provided by residues 120 to 124 (GTGSG), Asp-143, and Asn-186. A substrate-binding site is contributed by 186-189 (NPPY).

It belongs to the protein N5-glutamine methyltransferase family. PrmC subfamily.

The enzyme catalyses L-glutaminyl-[peptide chain release factor] + S-adenosyl-L-methionine = N(5)-methyl-L-glutaminyl-[peptide chain release factor] + S-adenosyl-L-homocysteine + H(+). Functionally, methylates the class 1 translation termination release factors RF1/PrfA and RF2/PrfB on the glutamine residue of the universally conserved GGQ motif. The chain is Release factor glutamine methyltransferase from Koribacter versatilis (strain Ellin345).